A 443-amino-acid polypeptide reads, in one-letter code: Endonuclease CUE2 (443 aa).

CUE domains follow at residues Asp8–Asp51 and Thr55–Thr98. The Smr domain maps to Leu347–Lys443.

MRNA endonuclease involved in the No-Go Decay (NGD) pathway, which catalyzes mRNA cleavage and degradation in response to ribosome collisions. Acts downstream of the ribosome collision sensor HEL2. Specifically recognizes and binds RPS7/eS7 polyubiquitinated by MOT2/NOT4 and HEL2, promoting CUE2 recruitment to stalled ribosomes, where it mediates mRNA cleavage upstream of the colliding ribosome. Also mediates mRNA cleavage within colliding ribosomes: recruited to colliding ribosomes downstream of the RQT (ribosome quality control trigger) complex following disassembly of stalled ribosomes and cleaves mRNAs partially released from the colliding ribosome. This is Endonuclease CUE2 from Saccharomyces cerevisiae (strain ATCC 204508 / S288c) (Baker's yeast).